The following is a 362-amino-acid chain: Histidinol-phosphate aminotransferase 2 (362 aa).

K222 carries the N6-(pyridoxal phosphate)lysine modification.

It belongs to the class-II pyridoxal-phosphate-dependent aminotransferase family. Histidinol-phosphate aminotransferase subfamily. Homodimer. Requires pyridoxal 5'-phosphate as cofactor.

It catalyses the reaction L-histidinol phosphate + 2-oxoglutarate = 3-(imidazol-4-yl)-2-oxopropyl phosphate + L-glutamate. Its pathway is amino-acid biosynthesis; L-histidine biosynthesis; L-histidine from 5-phospho-alpha-D-ribose 1-diphosphate: step 7/9. The chain is Histidinol-phosphate aminotransferase 2 from Carboxydothermus hydrogenoformans (strain ATCC BAA-161 / DSM 6008 / Z-2901).